A 289-amino-acid chain; its full sequence is Bifunctional protein FolD (289 aa).

NADP(+) contacts are provided by residues 166–168 (GRS), Ser-191, and Ile-232.

Belongs to the tetrahydrofolate dehydrogenase/cyclohydrolase family. In terms of assembly, homodimer.

It catalyses the reaction (6R)-5,10-methylene-5,6,7,8-tetrahydrofolate + NADP(+) = (6R)-5,10-methenyltetrahydrofolate + NADPH. The catalysed reaction is (6R)-5,10-methenyltetrahydrofolate + H2O = (6R)-10-formyltetrahydrofolate + H(+). It participates in one-carbon metabolism; tetrahydrofolate interconversion. Its function is as follows. Catalyzes the oxidation of 5,10-methylenetetrahydrofolate to 5,10-methenyltetrahydrofolate and then the hydrolysis of 5,10-methenyltetrahydrofolate to 10-formyltetrahydrofolate. The chain is Bifunctional protein FolD from Synechococcus elongatus (strain ATCC 33912 / PCC 7942 / FACHB-805) (Anacystis nidulans R2).